The chain runs to 386 residues: Latent membrane protein 1 (386 aa).

The Cytoplasmic portion of the chain corresponds to 2-23 (DLDLERGPPGPRRPPRGPPLSS). Residues 24 to 44 (SIGLALLLLLLALLFWLYIIM) traverse the membrane as a helical segment. The Extracellular portion of the chain corresponds to 45–51 (SNWTGGA). Residues 52 to 72 (LLVLYAFALMLVIIILIIFIF) traverse the membrane as a helical segment. Residues 73–75 (RRD) lie on the Cytoplasmic side of the membrane. A helical transmembrane segment spans residues 76 to 96 (LLCPLGALCLLLLMITLLLIA). Over 97 to 106 (LWNLHGQALY) the chain is Extracellular. The helical transmembrane segment at 107–127 (LGIVLFIFGCLLVLGLWIYLL) threads the bilayer. The Cytoplasmic portion of the chain corresponds to 128-139 (EILWRLGATIWQ). The helical transmembrane segment at 140–160 (LLAFFLAFFLDIILLIIALYL) threads the bilayer. Residues 161–163 (QQN) lie on the Extracellular side of the membrane. Residues 164 to 184 (WWTLLVDLLWLLLFLAILIWM) form a helical membrane-spanning segment. Residues 185–386 (YYHGQRHSDE…HGPVQLSYYD (202 aa)) lie on the Cytoplasmic side of the membrane. The tract at residues 194–232 (EHHHDDSLPHPQQATDDSSNQSDSNSNEGRHLLLVSGAG) is CTAR1. The tract at residues 194–386 (EHHHDDSLPH…HGPVQLSYYD (193 aa)) is disordered. Low complexity-rich tracts occupy residues 209 to 220 (DDSSNQSDSNSN) and 251 to 267 (NGPQ…PQDP). Residues 342-386 (GGGGHSHDSGHDGIDPHLPTLLLGTSGSGGDDDDPHGPVQLSYYD) form a CTAR2 region. Basic and acidic residues predominate over residues 346 to 356 (HSHDSGHDGID). The span at 357 to 366 (PHLPTLLLGT) shows a compositional bias: low complexity.

It belongs to the herpesviridae LMP-1 family. Interacts (via PXQXT motif) with host tumor necrosis factor receptor-associated factor (TRAF) proteins TRAF1, TRAF2, TRAF3 and TRAF5. Interacts with TRAF3; this interaction activates B lymphocytes. Interacts with human protein ZMYND11; leading to negatively regulate NF-kappa-B activation. Interacts with host UBE2I; this interaction induces the sumoylation of various cellular proteins. Interacts with host IRF7. Interacts with host TYK2. Ubiquitinated on the N-terminus.

The protein resides in the host cell membrane. Functionally, acts as a CD40 functional homolog to prevent apoptosis of infected B-lymphocytes and drive their proliferation. Functions as a constitutively active tumor necrosis factor receptor that induces the activation of several signaling pathways, including those of the NF-kappa-B family. LMP1 signaling leads to up-regulation of antiapoptotic proteins and provide growth signals in latently infected cells. Interacts with host UBE2I and subsequently affects the sumoylation state of several cellular proteins. For example, induces the sumoylation of host IRF7 thereby limiting its transcriptional activity and modulating the activation of innate immune responses. Also inhibits host IFN-alpha-stimulated STAT2 nuclear translocation and interferon-stimulated response element transcriptional activity by interacting with and inhibiting host TYK2. Induces SUMO expression during viral latency thereby dysregulating the host sumoylation processes. The chain is Latent membrane protein 1 (LMP1) from Homo sapiens (Human).